A 225-amino-acid chain; its full sequence is Cytidylate kinase (225 aa).

11–19 is a binding site for ATP; the sequence is GPAAAGKST.

It belongs to the cytidylate kinase family. Type 1 subfamily.

It is found in the cytoplasm. The catalysed reaction is CMP + ATP = CDP + ADP. It catalyses the reaction dCMP + ATP = dCDP + ADP. The chain is Cytidylate kinase from Bacillus cereus (strain ATCC 10987 / NRS 248).